A 303-amino-acid polypeptide reads, in one-letter code: Quinolinate synthase (303 aa).

2 residues coordinate iminosuccinate: His-25 and Ser-42. A [4Fe-4S] cluster-binding site is contributed by Cys-87. Iminosuccinate is bound by residues 113–115 (YVN) and Ser-130. [4Fe-4S] cluster is bound at residue Cys-173. Residues 199 to 201 (HPE) and Thr-216 each bind iminosuccinate. Cys-261 is a [4Fe-4S] cluster binding site.

The protein belongs to the quinolinate synthase family. Type 2 subfamily. [4Fe-4S] cluster is required as a cofactor.

It is found in the cytoplasm. It carries out the reaction iminosuccinate + dihydroxyacetone phosphate = quinolinate + phosphate + 2 H2O + H(+). The protein operates within cofactor biosynthesis; NAD(+) biosynthesis; quinolinate from iminoaspartate: step 1/1. In terms of biological role, catalyzes the condensation of iminoaspartate with dihydroxyacetone phosphate to form quinolinate. In Desulforudis audaxviator (strain MP104C), this protein is Quinolinate synthase.